We begin with the raw amino-acid sequence, 331 residues long: Phosphoribosylformylglycinamidine cyclo-ligase (331 aa).

This sequence belongs to the AIR synthase family.

The protein localises to the cytoplasm. The enzyme catalyses 2-formamido-N(1)-(5-O-phospho-beta-D-ribosyl)acetamidine + ATP = 5-amino-1-(5-phospho-beta-D-ribosyl)imidazole + ADP + phosphate + H(+). Its pathway is purine metabolism; IMP biosynthesis via de novo pathway; 5-amino-1-(5-phospho-D-ribosyl)imidazole from N(2)-formyl-N(1)-(5-phospho-D-ribosyl)glycinamide: step 2/2. This chain is Phosphoribosylformylglycinamidine cyclo-ligase, found in Clostridium botulinum (strain Okra / Type B1).